The sequence spans 473 residues: Glutamate-1-semialdehyde 2,1-aminomutase, chloroplastic (473 aa).

A chloroplast-targeting transit peptide spans 1–37 (MSATLTGSGTALGFSCSSKISKRVSSSPSTRCSIKMS). K313 is modified (N6-(pyridoxal phosphate)lysine).

Belongs to the class-III pyridoxal-phosphate-dependent aminotransferase family. HemL subfamily. In terms of assembly, homodimer. Pyridoxal 5'-phosphate is required as a cofactor.

The protein resides in the plastid. The protein localises to the chloroplast. The enzyme catalyses (S)-4-amino-5-oxopentanoate = 5-aminolevulinate. It functions in the pathway porphyrin-containing compound metabolism; protoporphyrin-IX biosynthesis; 5-aminolevulinate from L-glutamyl-tRNA(Glu): step 2/2. It participates in porphyrin-containing compound metabolism; chlorophyll biosynthesis. The chain is Glutamate-1-semialdehyde 2,1-aminomutase, chloroplastic (GSA) from Brassica napus (Rape).